We begin with the raw amino-acid sequence, 283 residues long: BTB/POZ domain-containing protein KCTD15 (283 aa).

Residues 1-32 (MPHRKERPSGSSLHTHGSTGTAEGGNMSRLSL) are disordered. Over residues 9–21 (SGSSLHTHGSTGT) the composition is skewed to low complexity. 3 positions are modified to phosphoserine: serine 31, serine 35, and serine 38. Residues 56–126 (APVHIDVGGH…LRTSKLLLPD (71 aa)) form the BTB domain.

As to quaternary structure, forms oligomers, predominantly homopentamers. Interacts with KCTD1, probably forming heteropentamers depending on its abundance in a cell-type dependent manner. Interacts with TFAP2A; this interaction inhibits TFAP2A transcriptional activation.

The protein localises to the nucleus. During embryonic development, it is involved in neural crest formation. Inhibits AP2 transcriptional activity by interaction with its activation domain. The polypeptide is BTB/POZ domain-containing protein KCTD15 (KCTD15) (Homo sapiens (Human)).